Here is a 593-residue protein sequence, read N- to C-terminus: UvrABC system protein C (593 aa).

The GIY-YIG domain occupies 13–91; that stretch reads TTPGVYMMKD…IKEYRPKYNV (79 aa). The region spanning 202–237 is the UVR domain; it reads DEIVEELKKKMFEYADNLMFEKAQEIKNKITSLEQI.

Belongs to the UvrC family. As to quaternary structure, interacts with UvrB in an incision complex.

Its subcellular location is the cytoplasm. The UvrABC repair system catalyzes the recognition and processing of DNA lesions. UvrC both incises the 5' and 3' sides of the lesion. The N-terminal half is responsible for the 3' incision and the C-terminal half is responsible for the 5' incision. The chain is UvrABC system protein C from Caldicellulosiruptor saccharolyticus (strain ATCC 43494 / DSM 8903 / Tp8T 6331).